A 1033-amino-acid chain; its full sequence is Potassium-transporting ATPase alpha chain 1 (1033 aa).

Residues 1-96 (MGKENYELYS…NALRPPRGTP (96 aa)) are Cytoplasmic-facing. A phosphotyrosine mark is found at Tyr6 and Tyr9. The disordered stretch occupies residues 14–39 (GTGPGGDMAAKMSKKKAGGGGGKKKE). Residues 25 to 38 (MSKKKAGGGGGKKK) show a composition bias toward basic residues. Phosphoserine is present on Ser26. A helical membrane pass occupies residues 97 to 117 (EYVKFARQLAGGLQCLMWVAA). At 118–140 (AICLIAFAIQASEGDLTTDDNLY) the chain is on the lumenal side. Residues 141–161 (LALALIAVVVVTGCFGYYQEF) form a helical membrane-spanning segment. Residues 162 to 297 (KSTNIIASFK…NEKTPIAIEI (136 aa)) are Cytoplasmic-facing. Residues 298–317 (EHFVDIIAGLAILFGATFFV) traverse the membrane as a helical segment. The Lumenal segment spans residues 318 to 329 (VAMCIGYTFLRA). Residues 330-347 (MVFFMAIVVAYVPEGLLA) traverse the membrane as a helical segment. Positions 338, 339, 341, and 343 each coordinate K(+). Residues 348–781 (TVTVCLSLTA…EQGRLIFDNL (434 aa)) are Cytoplasmic-facing. The 4-aspartylphosphate intermediate role is filled by Asp385. Positions 385 and 387 each coordinate Mg(2+). Phosphoserine occurs at positions 461 and 599. Asp726 and Asp730 together coordinate Mg(2+). A helical transmembrane segment spans residues 782–801 (KKSIAYTLTKNIPELTPYLI). Residue Glu795 participates in K(+) binding. Over 802–811 (YITVSVPLPL) the chain is Lumenal. Residues 812 to 832 (GCITILFIELCTDIFPSVSLA) form a helical membrane-spanning segment. Glu820 is a K(+) binding site. The Cytoplasmic segment spans residues 833 to 852 (YEKAESDIMHLRPRNPRRDR). Ser838 carries the post-translational modification Phosphoserine. Residues 853–875 (LVNEPLAAYSYFQIGAIQSFAGF) traverse the membrane as a helical segment. At 876–927 (ADYFTAMAQEGWFPLLCVGLRPQWEDHHLQDLQDSYGQEWTFGQRLYQQYTC) the chain is on the lumenal side. The helical transmembrane segment at 928–947 (YTVFFISIEMCQIADVLIRK) threads the bilayer. Topologically, residues 948–961 (TRRLSAFQQGFFRN) are cytoplasmic. At Ser952 the chain carries Phosphoserine; by PKA. Residues 962 to 980 (RILVIAIVFQVCIGCFLCY) traverse the membrane as a helical segment. Residues 981–995 (CPGMPNIFNFMPIRF) lie on the Lumenal side of the membrane. The chain crosses the membrane as a helical span at residues 996–1016 (QWWLVPMPFGLLIFVYDEIRK). Topologically, residues 1017–1033 (LGVRCCPGSWWDQELYY) are cytoplasmic.

Belongs to the cation transport ATPase (P-type) (TC 3.A.3) family. Type IIC subfamily. In terms of assembly, the gastric H(+)/K(+) ATPase pump is composed of the catalytic alpha subunit ATP4A and the regulatory beta subunit ATP4B. Interacts (via the P-domain) with ATP4B (via N-terminus); this interaction stabilizes the lumenal-open E2 conformation state and prevents the reverse reaction of the transport cycle.

It localises to the apical cell membrane. It catalyses the reaction K(+)(out) + ATP + H2O + H(+)(in) = K(+)(in) + ADP + phosphate + 2 H(+)(out). The catalytic subunit of the gastric H(+)/K(+) ATPase pump which transports H(+) ions in exchange for K(+) ions across the apical membrane of parietal cells. Uses ATP as an energy source to pump H(+) ions to the gastric lumen while transporting K(+) ion from the lumen into the cell. Remarkably generates a million-fold proton gradient across the gastric parietal cell membrane, acidifying the gastric juice down to pH 1. Within a transport cycle, the transfer of a H(+) ion across the membrane is coupled to ATP hydrolysis and is associated with a transient phosphorylation that shifts the pump conformation from inward-facing (E1) to outward-facing state (E2). The release of the H(+) ion in the stomach lumen is followed by binding of K(+) ion converting the pump conformation back to the E1 state. This Rattus norvegicus (Rat) protein is Potassium-transporting ATPase alpha chain 1 (Atp4a).